The chain runs to 590 residues: Glutamine--tRNA ligase (590 aa).

The 'HIGH' region motif lies at 55-65 (PEPNGYLHIGH). ATP contacts are provided by residues 56–58 (EPN) and 62–68 (HIGHAKS). L-glutamine is bound by residues aspartate 93 and tyrosine 238. ATP-binding positions include threonine 257 and 292–293 (RL). Positions 299-303 (ITSKR) match the 'KMSKS' region motif.

Belongs to the class-I aminoacyl-tRNA synthetase family. Monomer.

It is found in the cytoplasm. It catalyses the reaction tRNA(Gln) + L-glutamine + ATP = L-glutaminyl-tRNA(Gln) + AMP + diphosphate. The chain is Glutamine--tRNA ligase from Polynucleobacter asymbioticus (strain DSM 18221 / CIP 109841 / QLW-P1DMWA-1) (Polynucleobacter necessarius subsp. asymbioticus).